The sequence spans 133 residues: Small ribosomal subunit protein bS6 (133 aa).

Belongs to the bacterial ribosomal protein bS6 family.

Its function is as follows. Binds together with bS18 to 16S ribosomal RNA. The protein is Small ribosomal subunit protein bS6 of Chlorobium luteolum (strain DSM 273 / BCRC 81028 / 2530) (Pelodictyon luteolum).